Consider the following 29-residue polypeptide: Cytochrome b6-f complex subunit 8 (29 aa).

A helical membrane pass occupies residues 3–23 (ILALGWVSVLALFTWSIAMVV).

It belongs to the PetN family. As to quaternary structure, the 4 large subunits of the cytochrome b6-f complex are cytochrome b6, subunit IV (17 kDa polypeptide, PetD), cytochrome f and the Rieske protein, while the 4 small subunits are PetG, PetL, PetM and PetN. The complex functions as a dimer.

The protein resides in the cellular thylakoid membrane. Component of the cytochrome b6-f complex, which mediates electron transfer between photosystem II (PSII) and photosystem I (PSI), cyclic electron flow around PSI, and state transitions. The protein is Cytochrome b6-f complex subunit 8 of Gloeothece citriformis (strain PCC 7424) (Cyanothece sp. (strain PCC 7424)).